Consider the following 578-residue polypeptide: 65-kDa microtubule-associated protein 2 (578 aa).

Coiled-coil stretches lie at residues 64–84 (AELLQTLSDATVELSNLTTAL), 151–184 (DETDLSLKRLDDFQRKLQELQKEKSDRLQKVLEF), 235–257 (TLKEDKMQRLKKLQELATQLTDL), 290–312 (ALALDLIEQAEVEVDRLDQLKSS), and 461–489 (AMLDEYTMLRQEREDEKRRLKEQKKQQEQ). Positions 473-494 (REDEKRRLKEQKKQQEQPHTDQ) are enriched in basic and acidic residues. The segment at 473 to 578 (REDEKRRLKE…SRADPVMASP (106 aa)) is disordered. Ser-503 and Ser-532 each carry phosphoserine. Polar residues predominate over residues 549–558 (KIASPSNIVA). Phosphoserine is present on residues Ser-566, Ser-569, and Ser-577.

This sequence belongs to the MAP65/ASE1 family. In terms of assembly, forms a dimer. Binds to microtubules (MT). Bundles polymerized MT via the formation of 25-nm crossbridges with centrally located endocytic MT.

Its subcellular location is the nucleus. The protein resides in the cytoplasm. It is found in the cytoskeleton. It localises to the spindle pole. The protein localises to the phragmoplast. Functionally, microtubule-associated protein that stabilize microtubules (MT). Involved in the regulation of MT organization and dynamics. Confers MT resistance to the drug propyzamide and cold conditions. The protein is 65-kDa microtubule-associated protein 2 (MAP65-2) of Arabidopsis thaliana (Mouse-ear cress).